The primary structure comprises 160 residues: Major strawberry allergen Fra a 1.04 (160 aa).

It belongs to the BetVI family. In terms of processing, phosphorylated in vivo. Phosphorylation prevents its activity as ribonuclease. As to expression, highly expressed in roots. Expressed a low levels in ripe red fruits.

Its function is as follows. Possesses ribonuclease activity in vitro. The protein is Major strawberry allergen Fra a 1.04 of Fragaria ananassa (Strawberry).